The following is a 1211-amino-acid chain: PH domain-containing protein DDB_G0287875 (1211 aa).

Positions 5 to 90 (QKKILKVFDQ…YKFFFLNPNG (86 aa)) constitute a Ras-associating 1 domain. The span at 103 to 112 (KSQSASTSGS) shows a compositional bias: polar residues. The disordered stretch occupies residues 103-133 (KSQSASTSGSAPPKKEPPKPQELQQKQHISK). A PH domain is found at 132–223 (SKGKSGWLLR…WAQELQATMN (92 aa)). Calponin-homology (CH) domains lie at 277 to 384 (TTLV…VGYF) and 392 to 502 (FNMR…LSGQ). Disordered stretches follow at residues 520–941 (VEPE…TESV) and 973–1110 (TSAT…PKNT). Positions 527–572 (SIRDKQLKLMREKKEEEDRLKKEKEEKEKEEKEKLEKESSAAAAAT) form a coiled coil. A compositionally biased stretch (basic and acidic residues) spans 528 to 565 (IRDKQLKLMREKKEEEDRLKKEKEEKEKEEKEKLEKES). Composition is skewed to low complexity over residues 566-596 (SAAA…PLKK), 607-646 (PPTV…TLTP), 655-668 (KKPA…KPVA), and 676-691 (PSSS…TTPS). A compositionally biased stretch (basic and acidic residues) spans 703–729 (QLEKEKQDRLEKARLEKEKAEKEEQEF). Residues 703 to 847 (QLEKEKQDRL…ERKHDENDMD (145 aa)) are a coiled coil. Positions 744–753 (LLEQQKQQQE) are enriched in low complexity. Composition is skewed to basic and acidic residues over residues 754-778 (GQER…QRQI) and 786-853 (EARI…KLLE). Residues 862–877 (PTITPPQSLHSSQIIR) are compositionally biased toward polar residues. Positions 880-909 (IEEDDQTNSELEMFQNEYNRLQDEEEHINS) form a coiled coil. Low complexity-rich tracts occupy residues 914–936 (GSSG…GASS) and 976–1010 (TTSD…TNNN). The span at 1032–1048 (TKEQQSIIDKQTGLVSK) shows a compositional bias: polar residues. Positions 1048-1076 (KQSTNNESNEQQQQQQQQQQLQQQQSSQN) form a coiled coil. Over residues 1049 to 1083 (QSTNNESNEQQQQQQQQQQLQQQQSSQNSTTSIST) the composition is skewed to low complexity. Residues 1093–1104 (NEEKEKESEPHK) show a composition bias toward basic and acidic residues. In terms of domain architecture, Ras-associating 2 spans 1112–1196 (GRVVVRICLE…DRFVFKKNDI (85 aa)).

The protein is PH domain-containing protein DDB_G0287875 of Dictyostelium discoideum (Social amoeba).